The chain runs to 101 residues: Small ribosomal subunit protein bS6 (101 aa).

This sequence belongs to the bacterial ribosomal protein bS6 family.

In terms of biological role, binds together with bS18 to 16S ribosomal RNA. This chain is Small ribosomal subunit protein bS6, found in Nitratidesulfovibrio vulgaris (strain ATCC 29579 / DSM 644 / CCUG 34227 / NCIMB 8303 / VKM B-1760 / Hildenborough) (Desulfovibrio vulgaris).